The sequence spans 282 residues: Pantothenate synthetase (282 aa).

ATP is bound at residue 30 to 37 (MGGLHQGH). Residue His-37 is the Proton donor of the active site. Gln-61 provides a ligand contact to (R)-pantoate. Residue Gln-61 coordinates beta-alanine. 146 to 149 (GQKD) contacts ATP. Residue Gln-152 coordinates (R)-pantoate. ATP contacts are provided by residues Ile-175 and 183–186 (MSTR).

Belongs to the pantothenate synthetase family. As to quaternary structure, homodimer.

The protein localises to the cytoplasm. It carries out the reaction (R)-pantoate + beta-alanine + ATP = (R)-pantothenate + AMP + diphosphate + H(+). It participates in cofactor biosynthesis; (R)-pantothenate biosynthesis; (R)-pantothenate from (R)-pantoate and beta-alanine: step 1/1. Its function is as follows. Catalyzes the condensation of pantoate with beta-alanine in an ATP-dependent reaction via a pantoyl-adenylate intermediate. The chain is Pantothenate synthetase from Vesicomyosocius okutanii subsp. Calyptogena okutanii (strain HA).